A 338-amino-acid polypeptide reads, in one-letter code: LINE-1 retrotransposable element ORF1 protein (338 aa).

The segment at 1–40 is disordered; the sequence is MGKKQNRKTGNSKTQSASPPPKERSSSPATEQSWMENDFD. Polar residues-rich tracts occupy residues 8–17 and 26–35; these read KTGNSKTQSA and SSPATEQSWM. A coiled-coil region spans residues 49 to 153; it reads RSNYSELRED…QSLQEIWDYV (105 aa). Residues 157 to 252 form an RNA recognition motif (RRM) domain region; sequence NLRLIGVPES…KGKPIRLTAD (96 aa). Residues 253–317 are C-terminal domain (CTD); it reads LSAETLQARR…TTRPALKELL (65 aa).

It belongs to the transposase 22 family. As to quaternary structure, homotrimer (via coiled coil domain). May also form larger homooligomers. May interact with DDX39A, HNRNPA1, SERBP1 and YBX1. Interacts with TEX19 and UBR2. Interacts with MOV10. Interacts with APOBEC3D; this interaction inhibits LINE-1 retrotransposition. In terms of processing, polyubiquitinated, probably by UBR2, which induces its degradation.

The protein localises to the nucleus. It is found in the nucleolus. The protein resides in the cytoplasm. Its subcellular location is the cytoplasmic ribonucleoprotein granule. It localises to the stress granule. Nucleic acid-binding protein which is essential for retrotransposition of LINE-1 elements in the genome. Functions as a nucleic acid chaperone binding its own transcript and therefore preferentially mobilizing the transcript from which they are encoded. In Homo sapiens (Human), this protein is LINE-1 retrotransposable element ORF1 protein (L1RE1).